Here is an 843-residue protein sequence, read N- to C-terminus: Tetratricopeptide repeat protein 7B (843 aa).

The TPR 1 repeat unit spans residues 97 to 131 (QESNLIMAKLNYVEGDYKEALNIYARVGLDDLPLT). Serine 160 and serine 202 each carry phosphoserine. TPR repeat units follow at residues 219 to 252 (ETGL…VETR), 363 to 396 (SVVY…AFEE), 397 to 430 (FHLW…KPDD), 479 to 514 (TYSL…SPTD), 516 to 548 (QAAF…QGDD), and 549 to 582 (ANSL…YPEN). Serine 625, serine 629, serine 630, serine 673, serine 677, serine 678, and serine 681 each carry phosphoserine. TPR repeat units follow at residues 696–729 (AQIW…FPMS), 730–763 (HNVL…SPTH), 765–797 (KSMQ…NSTA), and 798–831 (HEVW…EASS).

Component of a phosphatidylinositol 4-kinase (PI4K) complex, composed of PI4KA, EFR3 (EFR3A or EFR3B), TTC7 (TTC7A or TTC7B) and HYCC (HYCC1 or HYCC2). Interacts with PI4KA, interaction is direct. Interacts with EFR3 (EFR3A or EFR3B), interaction is direct. Interacts with HYCC (HYCC1 or HYCC2), interaction is direct. Association with the PI4K complex is strongly reduced by TMEM150A.

Its subcellular location is the cytoplasm. The protein resides in the cytosol. The protein localises to the cell membrane. Component of a complex required to localize phosphatidylinositol 4-kinase (PI4K) to the plasma membrane. The complex acts as a regulator of phosphatidylinositol 4-phosphate (PtdIns(4)P) synthesis. In the complex, plays a central role in bridging PI4KA to EFR3B and HYCC1, via direct interactions. This Homo sapiens (Human) protein is Tetratricopeptide repeat protein 7B (TTC7B).